The following is a 230-amino-acid chain: Ribonuclease 3 (230 aa).

The RNase III domain occupies 1-134 (MKQLEELLST…FLGALLLDKG (134 aa)). E47 provides a ligand contact to Mg(2+). D51 is an active-site residue. D120 and E123 together coordinate Mg(2+). E123 is a catalytic residue. A DRBM domain is found at 160 to 229 (DYKTCLQEFL…AKNALAQLSE (70 aa)).

Belongs to the ribonuclease III family. Homodimer. Requires Mg(2+) as cofactor.

It is found in the cytoplasm. The enzyme catalyses Endonucleolytic cleavage to 5'-phosphomonoester.. Functionally, digests double-stranded RNA. Involved in the processing of primary rRNA transcript to yield the immediate precursors to the large and small rRNAs (23S and 16S). Processes some mRNAs, and tRNAs when they are encoded in the rRNA operon. Processes pre-crRNA and tracrRNA of type II CRISPR loci if present in the organism. This chain is Ribonuclease 3, found in Streptococcus pyogenes serotype M28 (strain MGAS6180).